The sequence spans 343 residues: NADH-quinone oxidoreductase subunit H (343 aa).

A run of 8 helical transmembrane segments spans residues 21–41 (WTLV…LFCV), 95–115 (FILA…VVPF), 124–144 (VNVG…GVLL), 172–192 (MGFT…GDIV), 197–217 (GLWY…SVVA), 257–277 (IIMV…PPIE), 281–301 (FIPG…FFLW), and 317–337 (LGWK…GLAM).

The protein belongs to the complex I subunit 1 family. NDH-1 is composed of 14 different subunits. Subunits NuoA, H, J, K, L, M, N constitute the membrane sector of the complex.

Its subcellular location is the cell inner membrane. It catalyses the reaction a quinone + NADH + 5 H(+)(in) = a quinol + NAD(+) + 4 H(+)(out). NDH-1 shuttles electrons from NADH, via FMN and iron-sulfur (Fe-S) centers, to quinones in the respiratory chain. The immediate electron acceptor for the enzyme in this species is believed to be ubiquinone. Couples the redox reaction to proton translocation (for every two electrons transferred, four hydrogen ions are translocated across the cytoplasmic membrane), and thus conserves the redox energy in a proton gradient. This subunit may bind ubiquinone. This is NADH-quinone oxidoreductase subunit H from Magnetococcus marinus (strain ATCC BAA-1437 / JCM 17883 / MC-1).